A 284-amino-acid polypeptide reads, in one-letter code: Undecaprenyl-diphosphatase 2 (284 aa).

7 consecutive transmembrane segments (helical) span residues 6–26 (VIFI…EFIP), 46–66 (FAEM…VVLY), 94–114 (FGMN…LFYD), 119–139 (LFNL…LLVV), 183–203 (IMGG…SFFL), 227–247 (TLWI…IIVM), and 262–282 (FAVY…TNII).

This sequence belongs to the UppP family.

The protein resides in the cell membrane. It catalyses the reaction di-trans,octa-cis-undecaprenyl diphosphate + H2O = di-trans,octa-cis-undecaprenyl phosphate + phosphate + H(+). In terms of biological role, catalyzes the dephosphorylation of undecaprenyl diphosphate (UPP). Confers resistance to bacitracin. The polypeptide is Undecaprenyl-diphosphatase 2 (Clostridioides difficile (strain 630) (Peptoclostridium difficile)).